The following is a 361-amino-acid chain: Mitogen-activated protein kinase 14 (361 aa).

The Protein kinase domain occupies 25 to 309 (YQNLTPVGSG…AAEALAHSYF (285 aa)). Residues 31 to 39 (VGSGAYGSV) and K54 each bind ATP. D151 serves as the catalytic Proton acceptor. Residue T181 is modified to Phosphothreonine. Residues 181–183 (TGY) carry the TXY motif. Y183 bears the Phosphotyrosine mark.

Belongs to the protein kinase superfamily. CMGC Ser/Thr protein kinase family. MAP kinase subfamily. The cofactor is Mg(2+). Dually phosphorylated on Thr-181 and Tyr-183, which activates the enzyme.

It catalyses the reaction L-seryl-[protein] + ATP = O-phospho-L-seryl-[protein] + ADP + H(+). The catalysed reaction is L-threonyl-[protein] + ATP = O-phospho-L-threonyl-[protein] + ADP + H(+). Activated by tyrosine and threonine phosphorylation. In terms of biological role, serine/threonine kinase which acts as an essential component of the MAP kinase signal transduction pathway. mapk14a is one of the four p38 MAPKs which play an important role in the cascades of cellular responses evoked by extracellular stimuli such as pro-inflammatory cytokines or physical stress leading to direct activation of transcription factors. Accordingly, p38 MAPKs phosphorylate a broad range of proteins and it has been estimated that they may have approximately 200 to 300 substrates each. Some of the targets are downstream kinases which are activated through phosphorylation and further phosphorylate additional targets. MPK2 is activated by upstream MAPKK/MAPKKK and stimulates MAPKAP kinase 2 to phosphorylate small heat shock proteins. Does not phosphorylate myelin basic protein or MAPKAP kinase 1. In Xenopus laevis (African clawed frog), this protein is Mitogen-activated protein kinase 14 (mapk14).